The chain runs to 611 residues: Conglutin beta 1 (611 aa).

Positions 1-30 are cleaved as a signal peptide; the sequence is MAKMRVRLPMLILLLGVVFLLAASIGIAYG. 2 stretches are compositionally biased toward basic and acidic residues: residues 32–82 and 130–141; these read KDFT…RSQS and SRREEREEREQE. Disordered stretches follow at residues 32–194 and 384–407; these read KDFT…NRFQ and LRKH…NLRS. The span at 142 to 151 shows a compositional bias: low complexity; sequence QGSSSGSQRG. The segment covering 152–181 has biased composition (basic and acidic residues); sequence SGDERRQHRERRVHREEREQEQDSRSDSRR. A Cupin type-1 1 domain is found at 186–344; the sequence is YHFSSNRFQT…TFNTRYEEIE (159 aa). Low complexity predominate over residues 390 to 402; sequence SSSGEGKPSESGP. The 167-residue stretch at 403–569 folds into the Cupin type-1 2 domain; that stretch reads FNLRSNKPIY…TFPGSIEDVE (167 aa). N-linked (GlcNAc...) asparagine glycosylation is present at asparagine 434. The segment at 476-495 is disordered; that stretch reads DQQRQQDEQEEEYEQGEEEV. Over residues 483–492 the composition is skewed to acidic residues; it reads EQEEEYEQGE. The N-linked (GlcNAc...) asparagine glycan is linked to asparagine 519. Low complexity predominate over residues 580–589; that stretch reads FANAQPQQQQ. The interval 580-600 is disordered; that stretch reads FANAQPQQQQQREKEGRRGRR.

Belongs to the 7S seed storage protein family. In terms of assembly, component of globulins complexes which accumulate in seeds.

Seed storage protein. Accumulates during seed development and is hydrolyzed after germination to provide a carbon and nitrogen source for the developing seedling. This chain is Conglutin beta 1, found in Lupinus angustifolius (Narrow-leaved blue lupine).